The primary structure comprises 394 residues: L-lactate dehydrogenase (394 aa).

Positions 1–380 (MIISAASDYR…SRDSLVQNAE (380 aa)) constitute an FMN hydroxy acid dehydrogenase domain. Y24 is a substrate binding site. Residues S106 and Q127 each coordinate FMN. Y129 is a binding site for substrate. FMN is bound at residue T155. Residue R164 coordinates substrate. K251 serves as a coordination point for FMN. The Proton acceptor role is filled by H275. R278 serves as a coordination point for substrate. An FMN-binding site is contributed by 306–330 (DSGIRNGLDVVRMIALGADSVLLGR).

This sequence belongs to the FMN-dependent alpha-hydroxy acid dehydrogenase family. It depends on FMN as a cofactor.

Its subcellular location is the cell inner membrane. It carries out the reaction (S)-lactate + A = pyruvate + AH2. In terms of biological role, catalyzes the conversion of L-lactate to pyruvate. Is coupled to the respiratory chain. In Klebsiella pneumoniae (strain 342), this protein is L-lactate dehydrogenase.